The following is a 334-amino-acid chain: 4-hydroxyproline 2-epimerase (334 aa).

Cys-91 (proton acceptor) is an active-site residue. Substrate-binding positions include Gly-92–His-93, His-224, and Asp-250. Catalysis depends on Cys-254, which acts as the Proton donor. Position 255 to 256 (Gly-255 to Thr-256) interacts with substrate.

It belongs to the proline racemase family.

The catalysed reaction is trans-4-hydroxy-L-proline = cis-4-hydroxy-D-proline. Functionally, catalyzes the epimerization of trans-4-hydroxy-L-proline (t4LHyp) to cis-4-hydroxy-D-proline (c4DHyp). Is likely involved in a degradation pathway that converts t4LHyp to alpha-ketoglutarate. Displays no proline racemase activity. The sequence is that of 4-hydroxyproline 2-epimerase from Spirosoma linguale (strain ATCC 33905 / DSM 74 / LMG 10896 / Claus 1).